The sequence spans 129 residues: Phosphoribosyl-AMP cyclohydrolase (129 aa).

Asp-76 lines the Mg(2+) pocket. Residue Cys-77 coordinates Zn(2+). Residues Asp-78 and Asp-80 each coordinate Mg(2+). Residues Cys-97 and Cys-104 each contribute to the Zn(2+) site.

Belongs to the PRA-CH family. Homodimer. Requires Mg(2+) as cofactor. Zn(2+) is required as a cofactor.

The protein resides in the cytoplasm. It catalyses the reaction 1-(5-phospho-beta-D-ribosyl)-5'-AMP + H2O = 1-(5-phospho-beta-D-ribosyl)-5-[(5-phospho-beta-D-ribosylamino)methylideneamino]imidazole-4-carboxamide. Its pathway is amino-acid biosynthesis; L-histidine biosynthesis; L-histidine from 5-phospho-alpha-D-ribose 1-diphosphate: step 3/9. Its function is as follows. Catalyzes the hydrolysis of the adenine ring of phosphoribosyl-AMP. This chain is Phosphoribosyl-AMP cyclohydrolase, found in Leptothrix cholodnii (strain ATCC 51168 / LMG 8142 / SP-6) (Leptothrix discophora (strain SP-6)).